Reading from the N-terminus, the 794-residue chain is Protein sel-1 homolog 1 (794 aa).

A signal peptide spans 1–21 (MQVHVGLTLLLCAVLLSSATA). The disordered stretch occupies residues 20–91 (TASSDDESNQ…EEEVSVGEEI (72 aa)). An interaction with ERLEC1, OS9 and SYVN1 region spans residues 22–737 (SSDDESNQDE…DIFTQLDMDQ (716 aa)). The Lumenal portion of the chain corresponds to 22-738 (SSDDESNQDE…IFTQLDMDQL (717 aa)). 2 stretches are compositionally biased toward acidic residues: residues 23-32 (SDDESNQDES) and 62-77 (DSEDPEVESPLQEEEE). At serine 63 the chain carries Phosphoserine. Residues 122–170 (AHGEPCHFPFLFLDKEYDECTSDGRQDGRLWCATTYDYKTDEKWGFCET) form the Fibronectin type-II domain. Intrachain disulfides connect cysteine 127–cysteine 153 and cysteine 141–cysteine 168. Sel1-like repeat units lie at residues 183 to 218 (AEMIYQAGMKILNGSNRKSQKREAYRYLQKAAGMNH), 219 to 254 (TKALERVSYALLFGDYLTQNIQAAKEMFEKLTEEGS), 255 to 290 (PKGQTALGFLYVSGLGVNSSQAKALVYYTFGALGGN), 291 to 326 (LIAHMVLGYRYWAGIGVLQSCESVLTHYRLVANHVA), 373 to 409 (VQAQVGLGQLHLHGGRGVEQNHQRAFDYFNLAANAGN), 410 to 446 (SHAMAFLGKMYSEGSDIVPQSNETALHYFKKAADMGN), 447 to 482 (PVGQSGLGMAYLYGRGIQVNYDLALKYFQKAAEQGW), 483 to 518 (VDGQLQLGSMYYNGIGVKRDYKQALKYFNLASQGGH), and 519 to 554 (ILAFYNLAQMHASGTGVMRSCHTAVELFKNVCERGR). Residues asparagine 195 and asparagine 217 are each glycosylated (N-linked (GlcNAc...) asparagine). The N-linked (GlcNAc...) asparagine glycan is linked to asparagine 272. The segment at 352–537 (NSGMLEEDLI…MHASGTGVMR (186 aa)) is important for homodimerization and oligomerization. Residue asparagine 431 is glycosylated (N-linked (GlcNAc...) asparagine). Asparagine 608 carries N-linked (GlcNAc...) asparagine glycosylation. 2 Sel1-like repeats span residues 627–662 (TVARIKLGDYHFYGFGTDVDYETAFIHYRLASEQQH) and 664–699 (AQAMFNLGYMHEKGLGIKQDIHLAKRFYDMAAEASP). Residues 643-723 (TDVDYETAFI…VVYFLQYIRE (81 aa)) are interaction with SYVN1. Residues 738–794 (LLGPEWDLYLMTIIALLLGTVIAYRQRQHQDVPVPRPPGPWPAPPQQEGPPEQQPPQ) form a mediates retention in the endoplasmic reticulum region. The chain crosses the membrane as a helical span at residues 739 to 759 (LGPEWDLYLMTIIALLLGTVI). Residues 760-794 (AYRQRQHQDVPVPRPPGPWPAPPQQEGPPEQQPPQ) lie on the Cytoplasmic side of the membrane. The tract at residues 768–794 (DVPVPRPPGPWPAPPQQEGPPEQQPPQ) is disordered. Residues 771–794 (VPRPPGPWPAPPQQEGPPEQQPPQ) are compositionally biased toward pro residues.

This sequence belongs to the sel-1 family. Homodimer and homooligomer. May form a complex with ERLEC1, HSPA5, OS9, and SYVN1. Interacts with FOXRED2 and EDEM1. Interacts with LPL and LMF1; may stabilize the complex formed by LPL and LMF1 and thereby promote the export of LPL dimers. Component of the HRD1 complex, which comprises at least SYNV1/HRD1, DERL1/2, FAM8A1, HERPUD1/HERP, OS9, SEL1L and UBE2J1. SYNV1 assembles with SEL1L and FAM8A1 through its transmembrane domains, but interaction with its cytoplasmic domain is required to confer stability to FAM8A1 and enhance recruitment of HERPUD1. The interaction with SYNV1/HRD1 is direct. In terms of processing, N-glycosylated.

Its subcellular location is the endoplasmic reticulum membrane. Its function is as follows. Plays a role in the endoplasmic reticulum quality control (ERQC) system also called ER-associated degradation (ERAD) involved in ubiquitin-dependent degradation of misfolded endoplasmic reticulum proteins. Enhances SYVN1 stability. Plays a role in LPL maturation and secretion. Required for normal differentiation of the pancreas epithelium, and for normal exocrine function and survival of pancreatic cells. May play a role in Notch signaling. This is Protein sel-1 homolog 1 (Sel1l) from Mesocricetus auratus (Golden hamster).